Consider the following 486-residue polypeptide: MIQGTTSDAGKSTLVAGLCRLARRAGVRVAPFKPQNMALNSAVTVDGGEIGRAQALQAIAAGIAAHTDLNPVLLKPTSDRGAQVIIHGKARMNLDARAYHDYKPVAFEAVLESYARLQAAYETIFVEGAGSPAEINLRDRDIANMGFAEAVDCPVVLVADIDRGGVFAHLTGTLACLSASEQSRVRGFIINRFRGDVSLLKPGLDWLEAKTGKPVLGVVPYLHGLTLDAEDMLPPELRAAHDGGAARMLRVVVPVLPHISNHTDFDALRAHPQVDFEYVRSGTPVPPADLIILPGSKNVPGDLASLRAQGWDAVLQKHLRYGGRVIGICGGMQMLGREVADPHGVEGAPGTSAGLGWLDYSTVLTRDKTLKNVTGHLALPGSPEVAGYEIHMGETHGPALDTPALRLGDAQAAHPDGAISADGQILATYVHGLFDTPAACAALLAWAGLSDAEEIDYPALREASLERLADTLAEHLDLPKLFAAIG.

The GATase cobBQ-type domain occupies 248-439 (MLRVVVPVLP…VHGLFDTPAA (192 aa)). Cys329 (nucleophile) is an active-site residue. His431 is an active-site residue.

This sequence belongs to the CobB/CobQ family. CobQ subfamily.

It participates in cofactor biosynthesis; adenosylcobalamin biosynthesis. Functionally, catalyzes amidations at positions B, D, E, and G on adenosylcobyrinic A,C-diamide. NH(2) groups are provided by glutamine, and one molecule of ATP is hydrogenolyzed for each amidation. This chain is Cobyric acid synthase, found in Paraburkholderia phytofirmans (strain DSM 17436 / LMG 22146 / PsJN) (Burkholderia phytofirmans).